A 258-amino-acid polypeptide reads, in one-letter code: 5'-nucleotidase SurE (258 aa).

Positions 9, 10, 42, and 96 each coordinate a divalent metal cation.

It belongs to the SurE nucleotidase family. Requires a divalent metal cation as cofactor.

Its subcellular location is the cytoplasm. The catalysed reaction is a ribonucleoside 5'-phosphate + H2O = a ribonucleoside + phosphate. Its function is as follows. Nucleotidase that shows phosphatase activity on nucleoside 5'-monophosphates. This Campylobacter jejuni subsp. jejuni serotype O:6 (strain 81116 / NCTC 11828) protein is 5'-nucleotidase SurE.